The primary structure comprises 220 residues: dITP/XTP pyrophosphatase (220 aa).

13-18 (SHNAGK) contacts substrate. 2 residues coordinate Mg(2+): aspartate 45 and aspartate 74. Aspartate 74 (proton acceptor) is an active-site residue. Substrate is bound by residues serine 75, 163-166 (FGYD), lysine 186, and 199-200 (HR).

It belongs to the HAM1 NTPase family. In terms of assembly, homodimer. Mg(2+) serves as cofactor.

The catalysed reaction is XTP + H2O = XMP + diphosphate + H(+). It catalyses the reaction dITP + H2O = dIMP + diphosphate + H(+). It carries out the reaction ITP + H2O = IMP + diphosphate + H(+). Its function is as follows. Pyrophosphatase that catalyzes the hydrolysis of nucleoside triphosphates to their monophosphate derivatives, with a high preference for the non-canonical purine nucleotides XTP (xanthosine triphosphate), dITP (deoxyinosine triphosphate) and ITP. Seems to function as a house-cleaning enzyme that removes non-canonical purine nucleotides from the nucleotide pool, thus preventing their incorporation into DNA/RNA and avoiding chromosomal lesions. The protein is dITP/XTP pyrophosphatase of Brucella melitensis biotype 1 (strain ATCC 23456 / CCUG 17765 / NCTC 10094 / 16M).